The sequence spans 247 residues: Ribose-5-phosphate isomerase (247 aa).

This sequence belongs to the ribose 5-phosphate isomerase family.

Its subcellular location is the cytoplasm. It catalyses the reaction aldehydo-D-ribose 5-phosphate = D-ribulose 5-phosphate. The protein operates within carbohydrate degradation; pentose phosphate pathway; D-ribose 5-phosphate from D-ribulose 5-phosphate (non-oxidative stage): step 1/1. This Meyerozyma guilliermondii (strain ATCC 6260 / CBS 566 / DSM 6381 / JCM 1539 / NBRC 10279 / NRRL Y-324) (Yeast) protein is Ribose-5-phosphate isomerase (RKI1).